The sequence spans 301 residues: Aldose reductase (301 aa).

Gly-11 to Gly-20 is an NADP(+) binding site. Tyr-51 (proton donor) is an active-site residue. Substrate is bound at residue His-111. Residue Ser-209–Asn-266 coordinates NADP(+).

This sequence belongs to the aldo/keto reductase family.

It localises to the cytoplasm. The enzyme catalyses an alditol + NAD(+) = an aldose + NADH + H(+). The catalysed reaction is an alditol + NADP(+) = an aldose + NADPH + H(+). Its function is as follows. Catalyzes the NADPH-dependent reduction of a wide variety of carbonyl-containing compounds to their corresponding alcohols with a broad range of catalytic efficiencies. This chain is Aldose reductase, found in Encephalitozoon cuniculi (strain GB-M1) (Microsporidian parasite).